Consider the following 62-residue polypeptide: Photosystem II reaction center protein Z (62 aa).

2 consecutive transmembrane segments (helical) span residues Ala-8–Ala-28 and Phe-41–Ile-61.

Belongs to the PsbZ family. In terms of assembly, PSII is composed of 1 copy each of membrane proteins PsbA, PsbB, PsbC, PsbD, PsbE, PsbF, PsbH, PsbI, PsbJ, PsbK, PsbL, PsbM, PsbT, PsbY, PsbZ, Psb30/Ycf12, at least 3 peripheral proteins of the oxygen-evolving complex and a large number of cofactors. It forms dimeric complexes.

It localises to the plastid. Its subcellular location is the chloroplast thylakoid membrane. May control the interaction of photosystem II (PSII) cores with the light-harvesting antenna, regulates electron flow through the 2 photosystem reaction centers. PSII is a light-driven water plastoquinone oxidoreductase, using light energy to abstract electrons from H(2)O, generating a proton gradient subsequently used for ATP formation. In Phalaenopsis aphrodite subsp. formosana (Moth orchid), this protein is Photosystem II reaction center protein Z.